A 246-amino-acid chain; its full sequence is MSGHSKWHNIQAKKGKVDAKRGKIFTKIGKEIVVAVKQGGPSADSNPRLRDVIAKAKANNMPNDTIERSIKKASGELNAVDYETITYEGYGPAGIAVLVDVLTDNKNRSAGNVRYAFTKQGGNMGSTGCVSFMFQSKGQIVIEKKDGLDEDELMMMALDAGAEDFESEDEVYVVATSQEDFGTVREALEAEGLEFLEAEIKMVPDTYTAIDEDTATKFQKMLDVLEDDDDVQNVYHNAEFPEGWEE.

Belongs to the TACO1 family.

It is found in the cytoplasm. The protein is Probable transcriptional regulatory protein CLK_2466 of Clostridium botulinum (strain Loch Maree / Type A3).